The primary structure comprises 444 residues: N-succinylarginine dihydrolase (444 aa).

Substrate contacts are provided by residues 19 to 28 (SGLSVGNIAS), Asn-110, and 137 to 138 (HR). Glu-174 is an active-site residue. Position 214 (Arg-214) interacts with substrate. Residue His-250 is part of the active site. Residues Asp-252 and Asn-362 each contribute to the substrate site. Cys-368 acts as the Nucleophile in catalysis.

Belongs to the succinylarginine dihydrolase family. In terms of assembly, homodimer.

It catalyses the reaction N(2)-succinyl-L-arginine + 2 H2O + 2 H(+) = N(2)-succinyl-L-ornithine + 2 NH4(+) + CO2. The protein operates within amino-acid degradation; L-arginine degradation via AST pathway; L-glutamate and succinate from L-arginine: step 2/5. Its function is as follows. Catalyzes the hydrolysis of N(2)-succinylarginine into N(2)-succinylornithine, ammonia and CO(2). This Aliivibrio fischeri (strain MJ11) (Vibrio fischeri) protein is N-succinylarginine dihydrolase.